A 313-amino-acid chain; its full sequence is Olfactory receptor 8B2 (313 aa).

Topologically, residues 1–25 (MLARNNSLVTEFILAGLTDHPEFRQ) are extracellular. N-linked (GlcNAc...) asparagine glycosylation is present at asparagine 5. A helical transmembrane segment spans residues 26–46 (PLFFLFLVIYIVTMVGNLGLI). Residues 47–54 (TLFGLNSH) lie on the Cytoplasmic side of the membrane. The helical transmembrane segment at 55-75 (LHTPMYYFLFNLSFIDLCYSS) threads the bilayer. Residues 76–99 (VFTPKMLMNFVSKKNIISNVGCMT) are Extracellular-facing. A disulfide bond links cysteine 97 and cysteine 189. A helical transmembrane segment spans residues 100–120 (RLFFFLFFVISECYMLTSMAY). Residues 121 to 139 (DRYVAICNPLLYKVTMSHQ) are Cytoplasmic-facing. The helical transmembrane segment at 140–160 (VCSMLTFAAYIMGLAGATAHT) threads the bilayer. Over 161–197 (GCMLRLTFCSANIINHYLCDILPLLQLSCTSTYVNEV) the chain is Extracellular. A helical transmembrane segment spans residues 198-217 (VVLIVVGTNITVPSCTILIS). Residues 218 to 237 (YVFIVTSILHIKSTQGRSKA) are Cytoplasmic-facing. Residues 238 to 258 (FSTCSSHVIALSLFFGSAAFM) form a helical membrane-spanning segment. The Extracellular portion of the chain corresponds to 259–270 (YIKYSSGSMEQG). The helical transmembrane segment at 271–291 (KVSSVFYTNVVPMLNPLIYSL) threads the bilayer. The Cytoplasmic segment spans residues 292–313 (RNKDVKVALRKALIKIQRRNIF).

The protein belongs to the G-protein coupled receptor 1 family.

The protein localises to the cell membrane. Functionally, odorant receptor. The chain is Olfactory receptor 8B2 (OR8B2) from Homo sapiens (Human).